Consider the following 155-residue polypeptide: Mediator of RNA polymerase II transcription subunit 21 (155 aa).

The tract at residues 29 to 73 (QAPPSVPPGQHRVDTMPEIKGKAASENPQSNPPQPAEPPVPEKIS) is disordered. Positions 39–51 (HRVDTMPEIKGKA) are enriched in basic and acidic residues. The span at 58–69 (SNPPQPAEPPVP) shows a compositional bias: pro residues. Positions 75–147 (EQFNQDLKEF…EVLLKKVEDK (73 aa)) form a coiled coil.

The protein belongs to the Mediator complex subunit 21 family. In terms of assembly, component of the Mediator complex.

It is found in the nucleus. Functionally, component of the Mediator complex, a coactivator involved in the regulated transcription of nearly all RNA polymerase II-dependent genes. Mediator functions as a bridge to convey information from gene-specific regulatory proteins to the basal RNA polymerase II transcription machinery. Mediator is recruited to promoters by direct interactions with regulatory proteins and serves as a scaffold for the assembly of a functional preinitiation complex with RNA polymerase II and the general transcription factors. The chain is Mediator of RNA polymerase II transcription subunit 21 (SRB7) from Phaeosphaeria nodorum (strain SN15 / ATCC MYA-4574 / FGSC 10173) (Glume blotch fungus).